A 142-amino-acid polypeptide reads, in one-letter code: Pro-opiomelanocortin (142 aa).

The propeptide occupies 1-8 (SEPGRREG). Valine 23 is subject to Valine amide. Serine 41 bears the Phosphoserine mark.

Belongs to the POMC family. Post-translationally, specific enzymatic cleavages at paired basic residues yield the different active peptides. ACTH and MSH are produced by the pituitary gland.

It localises to the secreted. Its function is as follows. Stimulates the adrenal glands to release cortisol. Anorexigenic peptide. Increases the pigmentation of skin by increasing melanin production in melanocytes. In terms of biological role, increases the pigmentation of skin by increasing melanin production in melanocytes. Functionally, endogenous orexigenic opiate. Its function is as follows. Endogenous opiate. The chain is Pro-opiomelanocortin (POMC) from Neovison vison (American mink).